The sequence spans 131 residues: Photosystem II extrinsic protein U (131 aa).

An N-terminal signal peptide occupies residues 1–28 (MKFISRLLVACSLLIGLMGFLGADLAQA). A propeptide spanning residues 29 to 36 (LTPNPILA) is cleaved from the precursor.

It belongs to the PsbU family. In terms of assembly, PSII is composed of 1 copy each of membrane proteins PsbA, PsbB, PsbC, PsbD, PsbE, PsbF, PsbH, PsbI, PsbJ, PsbK, PsbL, PsbM, PsbT, PsbX, PsbY, PsbZ, Psb30/Ycf12, peripheral proteins PsbO, CyanoQ (PsbQ), PsbU, PsbV and a large number of cofactors. It forms dimeric complexes.

Its subcellular location is the cellular thylakoid membrane. In terms of biological role, one of the extrinsic, lumenal subunits of photosystem II (PSII). PSII is a light-driven water plastoquinone oxidoreductase, using light energy to abstract electrons from H(2)O, generating a proton gradient subsequently used for ATP formation. The extrinsic proteins stabilize the structure of photosystem II oxygen-evolving complex (OEC), the ion environment of oxygen evolution and protect the OEC against heat-induced inactivation. May modulate the Cl(-) requirement for oxygen evolution. The protein is Photosystem II extrinsic protein U of Synechocystis sp. (strain ATCC 27184 / PCC 6803 / Kazusa).